The sequence spans 233 residues: Cell surface glycoprotein gp42 (233 aa).

The N-terminal stretch at 1-16 (MLLWMVLLLCVSMTEA) is a signal peptide. Ig-like domains lie at 23–98 (PVLS…GTIQ) and 115–195 (PVLT…RDIS). Residues Asn-29, Asn-66, and Asn-181 are each glycosylated (N-linked (GlcNAc...) asparagine). Cystine bridges form between Cys-40/Cys-88 and Cys-136/Cys-184. Gly-206 is lipidated: GPI-anchor amidated glycine. Positions 207–233 (TASMKSTTVVIWLPVSCLVGWPWLLRF) are cleaved as a propeptide — removed in mature form.

As to expression, NK cells.

The protein localises to the cell membrane. The sequence is that of Cell surface glycoprotein gp42 from Rattus norvegicus (Rat).